Reading from the N-terminus, the 309-residue chain is Protein FdhE homolog (309 aa).

It belongs to the FdhE family.

The protein localises to the cytoplasm. Functionally, necessary for formate dehydrogenase activity. In Pseudomonas aeruginosa (strain ATCC 15692 / DSM 22644 / CIP 104116 / JCM 14847 / LMG 12228 / 1C / PRS 101 / PAO1), this protein is Protein FdhE homolog.